The following is a 693-amino-acid chain: DNA-directed RNA polymerase subunit beta' (693 aa).

The Zn(2+) site is built by C76, C78, C94, and C97. Positions 496, 498, and 500 each coordinate Mg(2+).

This sequence belongs to the RNA polymerase beta' chain family. RpoC1 subfamily. In plastids the minimal PEP RNA polymerase catalytic core is composed of four subunits: alpha, beta, beta', and beta''. When a (nuclear-encoded) sigma factor is associated with the core the holoenzyme is formed, which can initiate transcription. Mg(2+) is required as a cofactor. Requires Zn(2+) as cofactor.

The protein resides in the plastid. It localises to the chloroplast. It carries out the reaction RNA(n) + a ribonucleoside 5'-triphosphate = RNA(n+1) + diphosphate. In terms of biological role, DNA-dependent RNA polymerase catalyzes the transcription of DNA into RNA using the four ribonucleoside triphosphates as substrates. The sequence is that of DNA-directed RNA polymerase subunit beta' from Nuphar advena (Common spatterdock).